Reading from the N-terminus, the 947-residue chain is Protein NETWORKED 2A (947 aa).

In terms of domain architecture, NAB spans 10–90 (YSWWWASHIR…ERYDHLSREL (81 aa)). Residues 105-131 (VQFPLEDDSDENEDYDGRPRKPPKHLH) form a disordered region. Residues 109-118 (LEDDSDENED) show a composition bias toward acidic residues. Coiled-coil stretches lie at residues 348-454 (KLAE…IQDV) and 568-619 (VLRD…QKLD). Composition is skewed to basic and acidic residues over residues 618-627 (LDTTGKDSPH) and 635-644 (LEHEQGHHET). 3 disordered regions span residues 618–675 (LDTT…RTKS), 743–763 (RIES…AVAS), and 911–947 (KNRQ…KLPE). Positions 645-660 (VSISPTSNFSVATTPH) are enriched in polar residues. Over residues 662–675 (QVGDVKRTPGRTKS) the composition is skewed to basic and acidic residues. The stretch at 722-809 (VHQIQKYQTT…LANIQEEIAR (88 aa)) forms a coiled coil. 2 stretches are compositionally biased toward polar residues: residues 749 to 761 (QQES…NTAV) and 915 to 927 (QKQS…SCVS).

Belongs to the NET family. As to expression, expressed specifically in pollen.

It localises to the cell membrane. In terms of biological role, plant-specific actin binding protein. Associates with F-actin at the plasma membrane in growing pollen tubes. May be part of a membrane-cytoskeletal adapter complex. This Arabidopsis thaliana (Mouse-ear cress) protein is Protein NETWORKED 2A.